A 1098-amino-acid polypeptide reads, in one-letter code: Ubiquitin carboxyl-terminal hydrolase 36 (1098 aa).

The segment covering arginine 72–threonine 86 has biased composition (basic and acidic residues). The tract at residues arginine 72–valine 97 is disordered. The 302-residue stretch at alanine 122 to isoleucine 423 folds into the USP domain. Cysteine 131 acts as the Nucleophile in catalysis. Catalysis depends on histidine 382, which acts as the Proton acceptor. 2 disordered regions span residues lysine 428 to proline 464 and glutamate 483 to isoleucine 574. Phosphoserine occurs at positions 429, 463, 547, and 578. Residues proline 540–glycine 558 are compositionally biased toward low complexity. Residues glycine 589–asparagine 640 form a disordered region. The span at serine 606 to serine 617 shows a compositional bias: low complexity. Phosphoserine is present on serine 663. 2 disordered regions span residues proline 664–alanine 710 and histidine 722–valine 973. Over residues alanine 665–methionine 677 the composition is skewed to polar residues. Serine 678 carries the phosphoserine modification. Residues lysine 683–alanine 692 are compositionally biased toward low complexity. Serine 709 is modified (phosphoserine). The span at histidine 746–serine 763 shows a compositional bias: low complexity. Polar residues predominate over residues glycine 853 to glutamine 878. Over residues serine 889–arginine 898 the composition is skewed to basic residues. A compositionally biased stretch (polar residues) spans glycine 901–cysteine 917. Over residues aspartate 921–glutamine 932 the composition is skewed to basic and acidic residues. The segment covering lysine 933 to lysine 943 has biased composition (basic residues). Basic and acidic residues predominate over residues proline 944–serine 960.

It belongs to the peptidase C19 family. Interacts with isoform 3 of FBXW7; the interaction inhibits MYC degradation induced by SCF(FBW7) complex. Interacts with NTRK1; USP36 does not deubiquitinate NTRK1. Interacts with NEDD4L (via domains WW1, 3 and 4); the interaction inhibits ubiquitination of, at least, NTRK1, KCNQ2 and KCNQ3 by NEDD4L. Interacts (via C-terminus) with EXOSC10 (via C-terminus); the interaction is facilitated by the association with RNA and promotes sumoylation of EXOSC10. Polyubiquitinated by NEDD4L, no effect on USP36 protein levels. Both proteins interact with and regulate each other's ubiquitination levels.

It localises to the nucleus. The protein localises to the nucleolus. Its subcellular location is the cytoplasm. It catalyses the reaction Thiol-dependent hydrolysis of ester, thioester, amide, peptide and isopeptide bonds formed by the C-terminal Gly of ubiquitin (a 76-residue protein attached to proteins as an intracellular targeting signal).. Its function is as follows. Deubiquitinase essential for the regulation of nucleolar structure and function. Required for cell and organism viability. Plays an important role in ribosomal RNA processing and protein synthesis, which is mediated, at least in part, through deubiquitination of DHX33, NPM1 and FBL, regulating their protein stability. Functions as a transcriptional repressor by deubiquiting histone H2B at the promoters of genes critical for cellular differentiation, such as CDKN1A, thereby preventing histone H3 'Lys-4' trimethylation (H3K4). Specifically deubiquitinates MYC in the nucleolus, leading to prevent MYC degradation by the proteasome: acts by specifically interacting with isoform 3 of FBXW7 (FBW7gamma) in the nucleolus and counteracting ubiquitination of MYC by the SCF(FBW7) complex. In contrast, it does not interact with isoform 1 of FBXW7 (FBW7alpha) in the nucleoplasm. Interacts to and regulates the actions of E3 ubiquitin-protein ligase NEDD4L over substrates such as NTRK1, KCNQ2 and KCNQ3, affecting their expression an functions. Deubiquitinates SOD2, regulates SOD2 protein stability. Deubiquitinase activity is required to control selective autophagy activation by ubiquitinated proteins. Promotes CEP63 stabilization through 'Lys-48'-linked deubiquitination leading to increased stability. Acts as a SUMO ligase to promote EXOSC10 sumoylation critical for the nucleolar RNA exosome function in rRNA processing. Binds to pre-rRNAs. This is Ubiquitin carboxyl-terminal hydrolase 36 (Usp36) from Mus musculus (Mouse).